Reading from the N-terminus, the 29-residue chain is Trypsin inhibitor 1 (29 aa).

Intrachain disulfides connect C3–C20, C10–C22, and C16–C28.

It belongs to the protease inhibitor I7 (squash-type serine protease inhibitor) family.

Its subcellular location is the secreted. In terms of biological role, inhibits trypsin. This Momordica repens protein is Trypsin inhibitor 1.